The following is a 232-amino-acid chain: Ethylene-responsive transcription factor ERF025 (232 aa).

Residues 1-29 show a composition bias toward polar residues; that stretch reads MSNNNNSPTTVNQETTTSREVSITLPTDQ. Positions 1–63 are disordered; that stretch reads MSNNNNSPTT…TATGLSGKHS (63 aa). Residues 30–50 are compositionally biased toward low complexity; it reads SPQTSPGSSSSPSPRPSGGSP. Positions 64-120 form a DNA-binding region, AP2/ERF; the sequence is IFRGIRLRNGKWVSEIREPRKTTRIWLGTYPVPEMAAAAYDVAALALKGPDAVLNFP. The interval 213 to 232 is disordered; the sequence is PTMEDDSPENHEGDNLWSYK.

This sequence belongs to the AP2/ERF transcription factor family. ERF subfamily.

Its subcellular location is the nucleus. Probably acts as a transcriptional activator. Binds to the GCC-box pathogenesis-related promoter element. May be involved in the regulation of gene expression by stress factors and by components of stress signal transduction pathways. The protein is Ethylene-responsive transcription factor ERF025 (ERF025) of Arabidopsis thaliana (Mouse-ear cress).